The sequence spans 1380 residues: DNA-directed RNA polymerase subunit beta (1380 aa).

Belongs to the RNA polymerase beta chain family. The RNAP catalytic core consists of 2 alpha, 1 beta, 1 beta' and 1 omega subunit. When a sigma factor is associated with the core the holoenzyme is formed, which can initiate transcription.

The enzyme catalyses RNA(n) + a ribonucleoside 5'-triphosphate = RNA(n+1) + diphosphate. DNA-dependent RNA polymerase catalyzes the transcription of DNA into RNA using the four ribonucleoside triphosphates as substrates. In Ehrlichia canis (strain Jake), this protein is DNA-directed RNA polymerase subunit beta.